The chain runs to 525 residues: GMP synthase [glutamine-hydrolyzing] (525 aa).

Positions 9 to 207 (RILILDFGSQ…VKEICHCEAL (199 aa)) constitute a Glutamine amidotransferase type-1 domain. C86 functions as the Nucleophile in the catalytic mechanism. Active-site residues include H181 and E183. A GMPS ATP-PPase domain is found at 208–400 (WTPATIIEDA…LGLPYNMLYR (193 aa)). 235–241 (SGGVDSS) provides a ligand contact to ATP.

As to quaternary structure, homodimer.

The catalysed reaction is XMP + L-glutamine + ATP + H2O = GMP + L-glutamate + AMP + diphosphate + 2 H(+). It participates in purine metabolism; GMP biosynthesis; GMP from XMP (L-Gln route): step 1/1. Catalyzes the synthesis of GMP from XMP. In Tolumonas auensis (strain DSM 9187 / NBRC 110442 / TA 4), this protein is GMP synthase [glutamine-hydrolyzing].